The chain runs to 273 residues: Cysteine protease S273R (273 aa).

Catalysis depends on residues His-168 and Asn-187. Gln-226 lines the substrate pocket. Cys-232 serves as the catalytic Nucleophile.

It belongs to the peptidase C63 family.

It is found in the host cytoplasm. Its subcellular location is the virion. In terms of biological role, cysteine protease that plays several role during infection including processing of the structural polyprotein or inhibition of the host immune response. Catalyzes the maturation of the pp220 and pp62 polyprotein precursors into core-shell proteins. Plays a role in the disruption of host pyroptosis via specific cleavage of gasdermin D/GSDMD. In addition, strongly decreases the host cGAS-STING signaling by targeting IKBKE via its enzymatic activity. Also impairs host FOXJ1-mediated antiviral effect via degradation of FOXJ1. Cleaves host G3BP1 inducing loss of stress granules formation. Interacts with and induces the degradation of host STAT2 via polyubiquitination of the latter. The chain is Cysteine protease S273R from Ornithodoros (relapsing fever ticks).